Reading from the N-terminus, the 216-residue chain is Redox-sensing transcriptional repressor Rex (216 aa).

The H-T-H motif DNA-binding region spans 15–54 (KYLRVTQQLIEEGRDAVSSKELGDFTGINPVQVRRDLNAI). An NAD(+)-binding site is contributed by 89-94 (GAGNLG).

This sequence belongs to the transcriptional regulatory Rex family. Homodimer.

The protein localises to the cytoplasm. Functionally, modulates transcription in response to changes in cellular NADH/NAD(+) redox state. The polypeptide is Redox-sensing transcriptional repressor Rex (Rubrobacter xylanophilus (strain DSM 9941 / JCM 11954 / NBRC 16129 / PRD-1)).